The sequence spans 80 residues: RNA-binding protein Hfq (80 aa).

In terms of domain architecture, Sm spans 10-70 (DLFLNTVRKQ…ISTIMPGQPL (61 aa)).

Belongs to the Hfq family. In terms of assembly, homohexamer.

Its function is as follows. RNA chaperone that binds small regulatory RNA (sRNAs) and mRNAs to facilitate mRNA translational regulation in response to envelope stress, environmental stress and changes in metabolite concentrations. Also binds with high specificity to tRNAs. This is RNA-binding protein Hfq from Rhizobium meliloti (strain 1021) (Ensifer meliloti).